Reading from the N-terminus, the 407-residue chain is Argininosuccinate synthase (407 aa).

Residues 11–19 and Ala-38 contribute to the ATP site; that span reads AYSGGLDTS. L-citrulline is bound by residues Tyr-91 and Ser-96. ATP is bound at residue Gly-121. Residues Thr-123, Asn-127, and Asp-128 each contribute to the L-aspartate site. Asn-127 contributes to the L-citrulline binding site. 5 residues coordinate L-citrulline: Arg-131, Ser-181, Ser-190, Glu-266, and Tyr-278.

It belongs to the argininosuccinate synthase family. Type 1 subfamily. As to quaternary structure, homotetramer.

Its subcellular location is the cytoplasm. The enzyme catalyses L-citrulline + L-aspartate + ATP = 2-(N(omega)-L-arginino)succinate + AMP + diphosphate + H(+). It participates in amino-acid biosynthesis; L-arginine biosynthesis; L-arginine from L-ornithine and carbamoyl phosphate: step 2/3. The protein is Argininosuccinate synthase of Campylobacter concisus (strain 13826).